Reading from the N-terminus, the 354-residue chain is tRNase Z TRZ2, chloroplastic (354 aa).

The interval 1 to 21 (MQLSSSFPISPPKIFPSTKHH) is disordered. The transit peptide at 1–68 (MQLSSSFPIS…EEEEEYRKAR (68 aa)) directs the protein to the chloroplast.

It belongs to the RNase Z family. In terms of assembly, homodimer. Zn(2+) serves as cofactor. The cofactor is Ca(2+). Mn(2+) is required as a cofactor. It depends on Mg(2+) as a cofactor. Highly expressed in green and actively dividing tissues.

The protein localises to the plastid. Its subcellular location is the chloroplast. It carries out the reaction Endonucleolytic cleavage of RNA, removing extra 3' nucleotides from tRNA precursor, generating 3' termini of tRNAs. A 3'-hydroxy group is left at the tRNA terminus and a 5'-phosphoryl group is left at the trailer molecule.. Its function is as follows. Zinc phosphodiesterase, which displays tRNA 3'-processing endonuclease activity. Involved in tRNA maturation, by removing a 3'-trailer from precursor tRNA. This Arabidopsis thaliana (Mouse-ear cress) protein is tRNase Z TRZ2, chloroplastic.